A 65-amino-acid polypeptide reads, in one-letter code: Large ribosomal subunit protein bL35 (65 aa).

The tract at residues 1–23 (MPKIKTNRGAAKRFKKTGTGKVK) is disordered. Residues 10–23 (AAKRFKKTGTGKVK) show a composition bias toward basic residues.

It belongs to the bacterial ribosomal protein bL35 family.

In Trichlorobacter lovleyi (strain ATCC BAA-1151 / DSM 17278 / SZ) (Geobacter lovleyi), this protein is Large ribosomal subunit protein bL35.